Reading from the N-terminus, the 462-residue chain is Spermatogenesis- and oogenesis-specific basic helix-loop-helix-containing protein 2 (462 aa).

Positions 200 to 251 constitute a bHLH domain; sequence KASFLHSSKEKLRRERIKFCCEQLRTLLPYVKGRKSDVASVIEATVDYVKQV. Positions 422 to 462 are disordered; that stretch reads PASSRTASSSIFRGFRESDSGHQASQQPTGPSLQPQDSSYF. Polar residues predominate over residues 442 to 462; it reads GHQASQQPTGPSLQPQDSSYF.

It is found in the nucleus. Its function is as follows. Probable transcription factor, which may be involved in spermatogenesis and oogenesis. The protein is Spermatogenesis- and oogenesis-specific basic helix-loop-helix-containing protein 2 (Sohlh2) of Rattus norvegicus (Rat).